We begin with the raw amino-acid sequence, 279 residues long: Glutamate racemase (279 aa).

Residues 13–14 (DS) and 45–46 (YG) contribute to the substrate site. Residue cysteine 76 is the Proton donor/acceptor of the active site. A substrate-binding site is contributed by 77 to 78 (NT). Cysteine 185 acts as the Proton donor/acceptor in catalysis. Position 186-187 (186-187 (TH)) interacts with substrate.

It belongs to the aspartate/glutamate racemases family.

The enzyme catalyses L-glutamate = D-glutamate. It participates in cell wall biogenesis; peptidoglycan biosynthesis. Provides the (R)-glutamate required for cell wall biosynthesis. In Picosynechococcus sp. (strain ATCC 27264 / PCC 7002 / PR-6) (Agmenellum quadruplicatum), this protein is Glutamate racemase.